Consider the following 100-residue polypeptide: NADH-quinone oxidoreductase subunit K (100 aa).

3 helical membrane passes run 4–24 (FEYYVALSGLLMVLGFIGVII), 28–48 (IIAMLLSTELMLNAVNIAFVA), and 61–81 (FVFFILTIAAAEAAIGLGLII).

It belongs to the complex I subunit 4L family. NDH-1 is composed of 14 different subunits. Subunits NuoA, H, J, K, L, M, N constitute the membrane sector of the complex.

It localises to the cell inner membrane. It catalyses the reaction a quinone + NADH + 5 H(+)(in) = a quinol + NAD(+) + 4 H(+)(out). Its function is as follows. NDH-1 shuttles electrons from NADH, via FMN and iron-sulfur (Fe-S) centers, to quinones in the respiratory chain. The immediate electron acceptor for the enzyme in this species is believed to be ubiquinone. Couples the redox reaction to proton translocation (for every two electrons transferred, four hydrogen ions are translocated across the cytoplasmic membrane), and thus conserves the redox energy in a proton gradient. This is NADH-quinone oxidoreductase subunit K from Sulfurihydrogenibium sp. (strain YO3AOP1).